A 28-amino-acid polypeptide reads, in one-letter code: uncharacterized protein (28 aa).

The helical transmembrane segment at 5 to 27 (SAFHACNIIFLPLVKCASATIML) threads the bilayer.

Its subcellular location is the membrane. This is an uncharacterized protein from Saccharomyces cerevisiae (strain ATCC 204508 / S288c) (Baker's yeast).